A 422-amino-acid chain; its full sequence is Beta-1,3-galactosyltransferase 2 (422 aa).

The Cytoplasmic portion of the chain corresponds to 1 to 24; the sequence is MLQWRRRHCCFAKMTWNAKRSLFR. Residues 25 to 45 traverse the membrane as a helical; Signal-anchor for type II membrane protein segment; sequence THLIGVLSLVFLFAMFLFFNH. At 46–422 the chain is on the lumenal side; that stretch reads HDWLPGRAGF…AGRYRHRKLH (377 aa). Asparagine 75, asparagine 100, asparagine 119, asparagine 176, and asparagine 226 each carry an N-linked (GlcNAc...) asparagine glycan. The segment at 90-110 is disordered; sequence TLRPQTATNSNNTDLSPQGVT.

Belongs to the glycosyltransferase 31 family. The cofactor is Mn(2+).

Its subcellular location is the golgi apparatus membrane. It carries out the reaction an N-acetyl-beta-D-glucosaminyl derivative + UDP-alpha-D-galactose = a beta-D-galactosyl-(1-&gt;3)-N-acetyl-beta-D-glucosaminyl derivative + UDP + H(+). The enzyme catalyses a beta-D-GlcNAc-(1-&gt;3)-beta-D-Gal-(1-&gt;4)-beta-D-Glc-(1&lt;-&gt;1)-Cer(d18:1(4E)) + UDP-alpha-D-galactose = a beta-D-Gal-(1-&gt;3)-beta-D-GlcNAc-(1-&gt;3)-beta-D-Gal-(1-&gt;4)-beta-D-Glc-(1&lt;-&gt;1')-Cer(d18:1(4E)) + UDP + H(+). It catalyses the reaction a neolactoside IV(3)-beta-GlcNAc-nLc4Cer(d18:1(4E)) + UDP-alpha-D-galactose = a neolactoside IV(3)-beta-[Gal-beta-(1-&gt;3)-GlcNAc]-nLc4Cer(d18:1(4E)) + UDP + H(+). Its pathway is protein modification; protein glycosylation. Its function is as follows. Beta-1,3-galactosyltransferase that transfers galactose from UDP-galactose to substrates with a terminal beta-N-acetylglucosamine (beta-GlcNAc) residue. Can also utilize substrates with a terminal galactose residue, albeit with lower efficiency. Involved in the biosynthesis of the carbohydrate moieties of glycolipids and glycoproteins. Inactive towards substrates with terminal alpha-N-acetylglucosamine (alpha-GlcNAc) or alpha-N-acetylgalactosamine (alpha-GalNAc) residues. This chain is Beta-1,3-galactosyltransferase 2 (B3GALT2), found in Pongo abelii (Sumatran orangutan).